We begin with the raw amino-acid sequence, 422 residues long: MENTVLNLDSDVIHACEAIFQPIRLVYTHAQTPDVSGVSMLEKIQQILPQIAKNAESAEQLRRVPDENIKLLKEIGLHRAFQPKVYGGLEMSLPDFANCIVTLAGACAGTAWAFSLLCTHSHQIAMFSKQLQDEIWLKDPDATASSSIAPFGKVEEVEGGIILNGDYGWSSGCDHAEYAIVGFNRFDADGNKIYSFGVIPRSDYEIVDNWYAQAIKSSGSKMLKLVNVFIPEYRISKAKDMMEGKSAGFGLYPDSKIFYTPYRPYFASGFSAVSLGIAERMIEAFKEKQRNRVRAYTGANVGLATPALMRIAESTHQVAAARALLEKTWEDHRIHGLNHQYPNKETLAFWRTNQAYAVKMCIEAVDRLMAAAGATSFMDNSELQRLFRDAHMTGAHAYTDYDVCAQILGRELMGMEPDPTMV.

Tryptophan 112 contacts FMN. Positions 120 and 146 each coordinate substrate. FMN contacts are provided by residues 146-148 (SSI) and 169-171 (WSS). Substrate is bound at residue 263–266 (RPYF). FMN is bound by residues arginine 292, tyrosine 296, 374–375 (AT), and 396–397 (HA). Tyrosine 296 contacts substrate.

It belongs to the HpaH/HsaA monooxygenase family. As to quaternary structure, homotetramer. The p-hydroxyphenylacetate 3-hydroxylase (HpaH) is composed of an oxygenase component C2 and a reductase component C1.

The enzyme catalyses 4-hydroxyphenylacetate + FMNH2 + O2 = 3,4-dihydroxyphenylacetate + FMN + H2O + H(+). It carries out the reaction 4-hydroxyphenylacetate + FADH2 + O2 = 3,4-dihydroxyphenylacetate + FAD + H2O + H(+). It participates in aromatic compound metabolism; 4-hydroxyphenylacetate degradation; pyruvate and succinate semialdehyde from 4-hydroxyphenylacetate: step 1/7. With respect to regulation, inhibited by flavin concentrations greater than 15 uM. Also inhibited by excess p-hydroxyphenylacetate (HPA). In terms of biological role, oxygenase component of a two-component system that utilizes reduced FMN (FMNH2) supplied by the reductase component to catalyze the hydroxylation of 4-hydroxyphenylacetic acid, leading to the production of 3,4-dihydroxyphenylacetate (3,4-DHPA). Also utilizes other reduced flavins such as FADH2 and reduced riboflavin to a lesser extent. Only the compounds with a hydroxyl group in the para (p-) position can be hydroxylated. May also oxidize phenol to catechol, and hydroxylate other phenol derivatives. The protein is p-hydroxyphenylacetate 3-hydroxylase, oxygenase component of Acinetobacter baumannii.